The chain runs to 214 residues: Thymidylate kinase (214 aa).

14-21 serves as a coordination point for ATP; it reads GLEGAGKT.

This sequence belongs to the thymidylate kinase family.

It carries out the reaction dTMP + ATP = dTDP + ADP. Functionally, phosphorylation of dTMP to form dTDP in both de novo and salvage pathways of dTTP synthesis. The chain is Thymidylate kinase from Mannheimia succiniciproducens (strain KCTC 0769BP / MBEL55E).